Consider the following 76-residue polypeptide: Acyl carrier protein (76 aa).

Positions serine 2–threonine 76 constitute a Carrier domain. Serine 36 is subject to O-(pantetheine 4'-phosphoryl)serine.

This sequence belongs to the acyl carrier protein (ACP) family. Post-translationally, 4'-phosphopantetheine is transferred from CoA to a specific serine of apo-ACP by AcpS. This modification is essential for activity because fatty acids are bound in thioester linkage to the sulfhydryl of the prosthetic group.

The protein resides in the cytoplasm. It functions in the pathway lipid metabolism; fatty acid biosynthesis. Its function is as follows. Carrier of the growing fatty acid chain in fatty acid biosynthesis. The polypeptide is Acyl carrier protein (Methylococcus capsulatus (strain ATCC 33009 / NCIMB 11132 / Bath)).